We begin with the raw amino-acid sequence, 623 residues long: Heterogeneous nuclear ribonucleoprotein L (623 aa).

A compositionally biased stretch (basic residues) spans 1-16 (MSRRLLPRAEKRRRRL). The segment at 1–97 (MSRRLLPRAE…NYDDPHKTPA (97 aa)) is disordered. Residues 17–27 (EQRQQPDEQLR) show a composition bias toward basic and acidic residues. Over residues 28–37 (RAGAMVKMAA) the composition is skewed to low complexity. Residues 38 to 54 (AGGGGGGGRYYGGGNEG) are compositionally biased toward gly residues. Glycyl lysine isopeptide (Lys-Gly) (interchain with G-Cter in SUMO2) cross-links involve residues Lys-59 and Lys-62. Positions 69 to 87 (QHGGGGGGGSGAAGGGGGE) are enriched in gly residues. Phosphoserine is present on Ser-98. The region spanning 99–173 (PVVHIRGLID…HPAFVNYSTS (75 aa)) is the RRM 1 domain. Lys-133 participates in a covalent cross-link: Glycyl lysine isopeptide (Lys-Gly) (interchain with G-Cter in SUMO2). Ser-182 carries the post-translational modification Phosphoserine. Positions 190–267 (SVLLFTILNP…CTLKIEYAKP (78 aa)) constitute an RRM 2 domain. At Lys-266 the chain carries N6-acetyllysine. The span at 281–298 (DYTNPNLSGQGDPGSNPN) shows a compositional bias: polar residues. The tract at residues 281–413 (DYTNPNLSGQ…PPPPDYGPHA (133 aa)) is disordered. Ser-288 and Ser-295 each carry phosphoserine. Residue Lys-299 forms a Glycyl lysine isopeptide (Lys-Gly) (interchain with G-Cter in SUMO2) linkage. 2 positions are modified to asymmetric dimethylarginine: Arg-388 and Arg-392. Positions 398–409 (GHPPPPPPPPDY) are enriched in pro residues. Position 415 is a phosphoserine (Ser-415). RRM domains follow at residues 416–490 (PVLM…VSKQ) and 498–586 (SYGL…WDSK). Ser-578 carries the post-translational modification Phosphoserine; by CaMK4. Residue Lys-602 forms a Glycyl lysine isopeptide (Lys-Gly) (interchain with G-Cter in SUMO2) linkage.

In terms of assembly, identified in a IGF2BP1-dependent mRNP granule complex containing untranslated mRNAs. Interacts with HNRNPLL. Interacts with APEX1; the interaction is DNA-dependent. Component of a complex with SETD2. Interacts with ELAVL1. Part of a transcription inhibitory ribonucleoprotein complex composed at least of the circular RNA circZNF827, ZNF827 and HNRNPK. Interacts with CHD8 in an RNA-dependent manner. In terms of processing, several isoelectric forms of the L protein are probably the results of post-translational modifications. Phosphorylation at Ser-578 by CaMK4 enhances interaction with a CaMK4-responsive RNA element (CaRRE1), and prevents inclusion of the stress axis-regulated exon (STREX) of the KCNMA1 potassium channel transcripts upon membrane depolarization.

The protein resides in the nucleus. Its subcellular location is the nucleoplasm. It localises to the cytoplasm. In terms of biological role, splicing factor binding to exonic or intronic sites and acting as either an activator or repressor of exon inclusion. Exhibits a binding preference for CA-rich elements. Component of the heterogeneous nuclear ribonucleoprotein (hnRNP) complexes and associated with most nascent transcripts. Associates, together with APEX1, to the negative calcium responsive element (nCaRE) B2 of the APEX2 promoter. As part of a ribonucleoprotein complex composed at least of ZNF827, HNRNPK and the circular RNA circZNF827 that nucleates the complex on chromatin, may negatively regulate the transcription of genes involved in neuronal differentiation. Regulates alternative splicing of a core group of genes involved in neuronal differentiation, likely by mediating H3K36me3-coupled transcription elongation and co-transcriptional RNA processing via interaction with CHD8. This chain is Heterogeneous nuclear ribonucleoprotein L, found in Rattus norvegicus (Rat).